A 327-amino-acid chain; its full sequence is Quinone oxidoreductase (327 aa).

The protein belongs to the zinc-containing alcohol dehydrogenase family. Quinone oxidoreductase subfamily. In terms of assembly, homodimer.

It carries out the reaction 2 a quinone + NADPH + H(+) = 2 a 1,4-benzosemiquinone + NADP(+). The chain is Quinone oxidoreductase (qor) from Salmonella typhimurium (strain LT2 / SGSC1412 / ATCC 700720).